Reading from the N-terminus, the 1849-residue chain is MPRSPTSSEDEMAQSFSDYSVGSESDSSKEETIYDTIRATAEKPGGARTEESQGNTLVIRVVIHDLQQTKCIRFNPDATVWVAKQRILCTLTQSLKDVLNYGLFQPASNGRDGKFLDEERLLREYPQPVGEGVPSLEFRYKKRVYKQASLDEKQLAKLHTKTNLKKCMDHIQHRLVEKITKMLDRGLDPNFHDPETGETPLTLAAQLDDSVEVIKALKNGGAHLDFRAKDGMTALHKAARARNQVALKTLLELGASPDYKDSYGLTPLYHTAIVGGDPYCCELLLHEHATVCCKDENGWHEIHQACRYGHVQHLEHLLFYGADMSAQNASGNTALHICALYNQDSCARVLLFRGGNKELKNYNSQTPFQVAIIAGNFELAEYIKNHKETDIVPFREAPAYSNRRRRPPNTLAAPRVLLRSNSDNNLNASAPDWAVCSTATSHRSLSPQLLQQMPSKPEGAAKTIGSYVPGPRSRSPSLNRLGGAGEDGKRPQPLWHVGSPFALGANKDSLSAFEYPGPKRKLYSAVPGRLFVAVKPYQPQVDGEIPLHRGDRVKVLSIGEGGFWEGSARGHIGWFPAECVEEVQCKPRDSQAETRADRSKKLFRHYTVGSYDSFDTSSDCIIEEKTVVLQKKDNEGFGFVLRGAKADTPIEEFTPTPAFPALQYLESVDEGGVAWQAGLRTGDFLIEVNNENVVKVGHRQVVNMIRQGGNHLVLKVVTVTRNLDPDDTARKKAPPPPKRAPTTALTLRSKSMTSELEELVDKASVRKKKDKPEEIVPASKPSRAAENMAVEPRVATIKQRPSSRCFPAGSDMNSVYERQGIAVMTPTVPGSPKAPFLGIPRGTMRRQKSIDSRIFLSGITEEERQFLAPPMLKFTRSLSMPDTSEDIPPPPQSVPPSPPPPSPTTYNCPKSPTPRVYGTIKPAFNQNSAAKVSPATRSDTVATMMREKGMYFRRELDRYSLDSEDLYSRNAGPQANFRNKRGQMPENPYSEVGKIASKAVYVPAKPARRKGMLVKQSNVEDSPEKTCSIPIPTIIVKEPSTSSSGKSSQGSSMEIDPQAPEPPSQLRPDESLTVSSPFAAAIAGAVRDREKRLEARRNSPAFLSTDLGDEDVGLGPPAPRTRPSMFPEEGDFADEDSAEQLSSPMPSATPREPENHFVGGAEASAPGEAGRPLNSTSKAQGPESSPAVPSASSGTAGPGNYVHPLTGRLLDPSSPLALALSARDRAMKESQQGPKGEAPKADLNKPLYIDTKMRPSLDAGFPTVTRQNTRGPLRRQETENKYETDLGRDRKGDDKKNMLIDIMDTSQQKSAGLLMVHTVDATKLDNALQEEDEKAEVEMKPDSSPSEVPEGVSETEGALQISAAPEPTTVPGRTIVAVGSMEEAVILPFRIPPPPLASVDLDEDFIFTEPLPPPLEFANSFDIPDDRAASVPALSDLVKQKKSDTPQSPSLNSSQPTNSADSKKPASLSNCLPASFLPPPESFDAVADSGIEEVDSRSSSDHHLETTSTISTVSSISTLSSEGGENVDTCTVYADGQAFMVDKPPVPPKPKMKPIIHKSNALYQDALVEEDVDSFVIPPPAPPPPPGSAQPGMAKVLQPRTSKLWGDVTEIKSPILSGPKANVISELNSILQQMNREKLAKPGEGLDSPMGAKSASLAPRSPEIMSTISGTRSTTVTFTVRPGTSQPITLQSRPPDYESRTSGTRRAPSPVVSPTEMNKETLPAPLSAATASPSPALSDVFSLPSQPPSGDLFGLNPAGRSRSPSPSILQQPISNKPFTTKPVHLWTKPDVADWLESLNLGEHKEAFMDNEIDGSHLPNLQKEDLIDLGVTRVGHRMNIERALKQLLDR.

The interval 1-33 is disordered; it reads MPRSPTSSEDEMAQSFSDYSVGSESDSSKEETI. The span at 15–25 shows a compositional bias: low complexity; the sequence is SFSDYSVGSES. ANK repeat units follow at residues 196 to 226, 230 to 259, 263 to 293, 297 to 326, 330 to 359, and 363 to 393; these read TGET…HLDF, DGMT…SPDY, YGLT…TVCC, NGWH…DMSA, SGNT…NKEL, and NSQT…DIVP. The disordered stretch occupies residues 451–493; it reads QQMPSKPEGAAKTIGSYVPGPRSRSPSLNRLGGAGEDGKRPQP. In terms of domain architecture, SH3 spans 526–585; sequence VPGRLFVAVKPYQPQVDGEIPLHRGDRVKVLSIGEGGFWEGSARGHIGWFPAECVEEVQC. Residues 626 to 720 enclose the PDZ domain; it reads TVVLQKKDNE…HLVLKVVTVT (95 aa). Over residues 764–774 the composition is skewed to basic and acidic residues; sequence SVRKKKDKPEE. A disordered region spans residues 764-808; it reads SVRKKKDKPEEIVPASKPSRAAENMAVEPRVATIKQRPSSRCFPA. A Phosphoserine modification is found at Ser-831. Thr-860 bears the Phosphothreonine mark. The tract at residues 878–910 is disordered; sequence LSMPDTSEDIPPPPQSVPPSPPPPSPTTYNCPK. Residues 887–903 are compositionally biased toward pro residues; it reads IPPPPQSVPPSPPPPSP. Residue Ser-960 is modified to Phosphoserine. Disordered stretches follow at residues 1013–1293, 1328–1371, 1432–1526, and 1574–1594; these read LVKQ…RKGD, LQEE…TTVP, PALS…GGEN, and SFVI…PGMA. Low complexity predominate over residues 1040 to 1052; the sequence is STSSSGKSSQGSS. Residues 1086–1097 are compositionally biased toward basic and acidic residues; it reads VRDREKRLEARR. Position 1099 is a phosphoserine (Ser-1099). A compositionally biased stretch (acidic residues) spans 1128–1138; that stretch reads EEGDFADEDSA. Low complexity-rich tracts occupy residues 1159-1170, 1181-1199, and 1208-1221; these read GGAEASAPGEAG, GPES…AGPG, and RLLD…LALS. The segment covering 1274–1293 has biased composition (basic and acidic residues); that stretch reads RRQETENKYETDLGRDRKGD. The residue at position 1278 (Thr-1278) is a Phosphothreonine. The short motif at 1327-1333 is the SH3-binding element; the sequence is ALQEEDE. Residues 1343 to 1357 are compositionally biased toward low complexity; the sequence is SSPSEVPEGVSETEG. Over residues 1445–1460 the composition is skewed to polar residues; the sequence is TPQSPSLNSSQPTNSA. Residues 1494–1505 show a composition bias toward basic and acidic residues; that stretch reads VDSRSSSDHHLE. Low complexity predominate over residues 1506-1522; sequence TTSTISTVSSISTLSSE. The segment covering 1577–1588 has biased composition (pro residues); the sequence is IPPPAPPPPPGS. The O-linked (GlcNAc) threonine glycan is linked to Thr-1667. Residues 1678–1692 show a composition bias toward polar residues; sequence FTVRPGTSQPITLQS. Residues 1678–1776 are disordered; it reads FTVRPGTSQP…SILQQPISNK (99 aa). Phosphoserine occurs at positions 1709 and 1713. 2 stretches are compositionally biased toward low complexity: residues 1721-1738 and 1760-1774; these read TLPA…PALS and RSRS…QPIS. An SAM domain is found at 1786–1849; it reads WTKPDVADWL…ERALKQLLDR (64 aa).

The protein belongs to the SHANK family. In terms of assembly, is part of a complex with DLG4/PSD-95 and DLGAP1/GKAP. Interacts with CTTN/cortactin SH3 domain, DLGAP1/GKAP and alpha-latrotoxin receptor 1. Interacts with DNM2, DBNL, GRID2, BAIAP2, SLC9A3, PLCB3 and CFTR. Interacts (via proline-rich region) with PDE4D. Interacts with ABI1 (via SH3 domain). Isoform 3 is present in epithelial colonic cells (at protein level).

The protein localises to the apical cell membrane. It localises to the cytoplasm. It is found in the synapse. Its subcellular location is the postsynaptic density. The protein resides in the cell projection. The protein localises to the growth cone. It localises to the dendritic spine. Its function is as follows. Seems to be an adapter protein in the postsynaptic density (PSD) of excitatory synapses that interconnects receptors of the postsynaptic membrane including NMDA-type and metabotropic glutamate receptors, and the actin-based cytoskeleton. May play a role in the structural and functional organization of the dendritic spine and synaptic junction. The sequence is that of SH3 and multiple ankyrin repeat domains protein 2 (SHANK2) from Homo sapiens (Human).